Reading from the N-terminus, the 225-residue chain is MSIKQWPEGERPREKLLERGAAALSDAELLAILLRVGTRGMSAVDLARYLLQEFGSLGRLMSAEVGKLSAYKGMGTASFTQFAVVREIGRRILAEELQESIVLSDPDTVADYLRFHLGQEKVEVSVALLLNRQNQLIAVRELSRGTVAENTIYIREIVKLALDEYADSLIIAHNHPGGSPEPSQEDIMFTRRLAQAMSLVDVSLLDHFIVTSQSVRSFRQLGLMP.

The MPN domain maps to 102 to 224; the sequence is VLSDPDTVAD…VRSFRQLGLM (123 aa). The Zn(2+) site is built by His-173, His-175, and Asp-186. The short motif at 173 to 186 is the JAMM motif element; it reads HNHPGGSPEPSQED.

It belongs to the UPF0758 family.

The polypeptide is UPF0758 protein NMC1174 (Neisseria meningitidis serogroup C / serotype 2a (strain ATCC 700532 / DSM 15464 / FAM18)).